The following is a 124-amino-acid chain: Large ribosomal subunit protein bL12 (124 aa).

The protein belongs to the bacterial ribosomal protein bL12 family. Homodimer. Part of the ribosomal stalk of the 50S ribosomal subunit. Forms a multimeric L10(L12)X complex, where L10 forms an elongated spine to which 2 to 4 L12 dimers bind in a sequential fashion. Binds GTP-bound translation factors.

Functionally, forms part of the ribosomal stalk which helps the ribosome interact with GTP-bound translation factors. Is thus essential for accurate translation. The sequence is that of Large ribosomal subunit protein bL12 from Desulfitobacterium hafniense (strain DSM 10664 / DCB-2).